The following is a 730-amino-acid chain: Denticleless protein homolog (730 aa).

The residue at position 1 (Met-1) is an N-acetylmethionine. WD repeat units lie at residues 47–89 (GVPV…FRKK), 96–135 (AHWN…LIGT), and 138–178 (GHQC…KDGF). A DDB1-binding motif motif is present at residues 168–171 (WDTR). Positions 188–198 (AHNTSDKQTPS) are enriched in polar residues. The segment at 188–210 (AHNTSDKQTPSKPKKKQNSKGLA) is disordered. Thr-196 is modified (phosphothreonine). The short motif at 197 to 203 (PSKPKKK) is the Nuclear localization signal element. WD repeat units follow at residues 214–253 (DFQQ…TAYR), 267–308 (SSTR…TSPV), 313–354 (GHQN…QPPT), and 358–398 (GHSQ…EEKP). The DDB1-binding motif motif lies at 243-246 (WDLR). The interval 399–443 (GGDKLSTVGWASQKKKESRPGLVTVTSSQSTPAKAPRAKCNPSNS) is disordered. A phosphoserine mark is found at Ser-410 and Ser-426. At Thr-464 the chain carries Phosphothreonine; by CDK1 and CDK2. The interval 465 to 498 (PTFSIKTSPAKARSPINRRGSVSSVSPKPPSSFK) is disordered. A phosphoserine mark is found at Ser-485, Ser-490, Ser-495, and Ser-512. Phosphothreonine is present on Thr-516. Residue Ser-557 is modified to Phosphoserine. Disordered stretches follow at residues 599-631 (SKDS…YASE) and 644-703 (GEGS…TITP). Phosphoserine occurs at positions 676 and 679. The segment covering 679 to 689 (SPSSQTPNSRR) has biased composition (polar residues). Residues Thr-684 and Thr-702 each carry the phosphothreonine modification. Ser-717 is subject to Phosphoserine.

This sequence belongs to the WD repeat cdt2 family. In terms of assembly, component of the DCX(DTL) E3 ubiquitin ligase complex (also called CRL4(CDT2)), at least composed of CUL4 (CUL4A or CUL4B), DDB1, DTL/CDT2 and RBX1. Interacts with CDKN1A. Interacts with DDB1. Interacts with FBXO11; SCF(FBXWO11) controls DTL stability but DCX(DTL) does not control FBXO11 stability. Interacts with CRY1. Ubiquitinated by the anaphase promoting complex/cyclosome (APC/C). Autoubiquitinated through 'Lys-48'-polyubiquitin chains in a PCNA-independent reaction, allowing proteasomal turnover. Polyubiquitinated by SCF(FBXO11) when not phosphorylated, leading to its degradation. A tight regulation of the polyubiquitination by SCF(FBXO11) is involved in the control of different processes such as TGF-beta signaling, cell cycle progression and exit. In terms of processing, phosphorylated at Thr-464 by CDK1/Cyclin-B and CDK2/Cyclin-A but not by CDK2/Cyclin-E, MAPK1 or PLK1. Phosphorylation at Thr-464 inhibits the interaction with FBXO11 and decreases upon cell cycle exit induced by TGF-beta or serum starvation. Expressed in placenta and testis, very low expression seen in skeletal muscle. Detected in all hematopoietic tissues examined, with highest expression in thymus and bone marrow. A low level detected in the spleen and lymph node, and barely detectable level in the peripheral leukocytes. RA treatment down-regulated the expression in NT2 cell.

The protein resides in the nucleus. Its subcellular location is the nucleus membrane. The protein localises to the cytoplasm. It is found in the cytoskeleton. It localises to the microtubule organizing center. The protein resides in the centrosome. Its subcellular location is the chromosome. It participates in protein modification; protein ubiquitination. Substrate-specific adapter of a DCX (DDB1-CUL4-X-box) E3 ubiquitin-protein ligase complex required for cell cycle control, DNA damage response and translesion DNA synthesis. The DCX(DTL) complex, also named CRL4(CDT2) complex, mediates the polyubiquitination and subsequent degradation of CDT1, CDKN1A/p21(CIP1), FBH1, KMT5A and SDE2. CDT1 degradation in response to DNA damage is necessary to ensure proper cell cycle regulation of DNA replication. CDKN1A/p21(CIP1) degradation during S phase or following UV irradiation is essential to control replication licensing. KMT5A degradation is also important for a proper regulation of mechanisms such as TGF-beta signaling, cell cycle progression, DNA repair and cell migration. Most substrates require their interaction with PCNA for their polyubiquitination: substrates interact with PCNA via their PIP-box, and those containing the 'K+4' motif in the PIP box, recruit the DCX(DTL) complex, leading to their degradation. In undamaged proliferating cells, the DCX(DTL) complex also promotes the 'Lys-164' monoubiquitination of PCNA, thereby being involved in PCNA-dependent translesion DNA synthesis. The DDB1-CUL4A-DTL E3 ligase complex regulates the circadian clock function by mediating the ubiquitination and degradation of CRY1. In Homo sapiens (Human), this protein is Denticleless protein homolog (DTL).